Here is a 334-residue protein sequence, read N- to C-terminus: Ornithine carbamoyltransferase subunit F (334 aa).

Residues 56–59 (STRT), Gln-83, Arg-107, and 134–137 (HPTQ) contribute to the carbamoyl phosphate site. L-ornithine-binding positions include Asn-168, Asp-232, and 236–237 (SM). Residues 274–275 (CL) and Arg-320 contribute to the carbamoyl phosphate site.

This sequence belongs to the aspartate/ornithine carbamoyltransferase superfamily. OTCase family. In terms of assembly, in E.coli strain K12, trimer of identical or non-identical chains are composed of ArgI (I) and/or ArgF (F). The trimer has the following composition: FFI, FFF, FII, III. E.coli strains B and W, which are known to contain only ArgI, produce only a trimer of identical chains (III).

It is found in the cytoplasm. The enzyme catalyses carbamoyl phosphate + L-ornithine = L-citrulline + phosphate + H(+). It functions in the pathway amino-acid biosynthesis; L-arginine biosynthesis; L-arginine from L-ornithine and carbamoyl phosphate: step 1/3. Functionally, reversibly catalyzes the transfer of the carbamoyl group from carbamoyl phosphate (CP) to the N(epsilon) atom of ornithine (ORN) to produce L-citrulline, which is a substrate for argininosuccinate synthetase, the enzyme involved in the final step in arginine biosynthesis. The protein is Ornithine carbamoyltransferase subunit F of Escherichia coli (strain K12).